Consider the following 165-residue polypeptide: MKFLIEDNIKFMQQFSIYHTSNELFLKAILRLIEKCYYSNFKSVILTTDVHQQEMLNKNLWTYSRKQFIPHGSKFDPQPAKQPIYITDELQNPNNASVLVIISPTDIAKILQVKEYIKVFKRIIIITDLLENLKELIIKINKFTGQENKIDCFTQNPIGTWNKIA.

Belongs to the DNA polymerase III chi/HolC chain family. As to quaternary structure, DNA polymerase III contains a core (composed of alpha, epsilon and theta chains) that associates with a tau subunit. This core dimerizes to form the POLIII' complex. PolIII' associates with the gamma complex (composed of gamma, delta, delta', psi and chi chains) and with the beta chain to form the complete DNA polymerase III complex. Interacts directly with the psi subunit (holD). The only subunit of the DNA polymerase III holoenzyme known to interact with single-stranded DNA binding protein (SSB).

The catalysed reaction is DNA(n) + a 2'-deoxyribonucleoside 5'-triphosphate = DNA(n+1) + diphosphate. Its function is as follows. Part of the beta sliding clamp loading complex, which hydrolyzes ATP to load the beta clamp onto primed DNA to form the DNA replication pre-initiation complex. DNA polymerase III is a complex, multichain enzyme responsible for most of the replicative synthesis in bacteria. This DNA polymerase also exhibits 3' to 5' exonuclease activity. The chain is Probable DNA polymerase III subunit chi from Rickettsia prowazekii (strain Madrid E).